A 407-amino-acid chain; its full sequence is Biotin synthase (407 aa).

The region spanning 47–277 (WFGRRVKLNY…DVEVRIAGGR (231 aa)) is the Radical SAM core domain. [4Fe-4S] cluster-binding residues include cysteine 65, cysteine 69, and cysteine 72. [2Fe-2S] cluster is bound by residues cysteine 109, cysteine 142, cysteine 202, and arginine 272. A disordered region spans residues 368–407 (GGGVCAPAPAATTPRPAEEPRTDLVAVRRRGAGTDLAPNA). A compositionally biased stretch (low complexity) spans 373–382 (APAPAATTPR).

The protein belongs to the radical SAM superfamily. Biotin synthase family. As to quaternary structure, homodimer. [4Fe-4S] cluster serves as cofactor. [2Fe-2S] cluster is required as a cofactor.

The enzyme catalyses (4R,5S)-dethiobiotin + (sulfur carrier)-SH + 2 reduced [2Fe-2S]-[ferredoxin] + 2 S-adenosyl-L-methionine = (sulfur carrier)-H + biotin + 2 5'-deoxyadenosine + 2 L-methionine + 2 oxidized [2Fe-2S]-[ferredoxin]. It functions in the pathway cofactor biosynthesis; biotin biosynthesis; biotin from 7,8-diaminononanoate: step 2/2. Its function is as follows. Catalyzes the conversion of dethiobiotin (DTB) to biotin by the insertion of a sulfur atom into dethiobiotin via a radical-based mechanism. The sequence is that of Biotin synthase from Streptomyces coelicolor (strain ATCC BAA-471 / A3(2) / M145).